The sequence spans 362 residues: Aminomethyltransferase (362 aa).

It belongs to the GcvT family. As to quaternary structure, the glycine cleavage system is composed of four proteins: P, T, L and H.

It carries out the reaction N(6)-[(R)-S(8)-aminomethyldihydrolipoyl]-L-lysyl-[protein] + (6S)-5,6,7,8-tetrahydrofolate = N(6)-[(R)-dihydrolipoyl]-L-lysyl-[protein] + (6R)-5,10-methylene-5,6,7,8-tetrahydrofolate + NH4(+). The glycine cleavage system catalyzes the degradation of glycine. The sequence is that of Aminomethyltransferase from Listeria monocytogenes serotype 4b (strain CLIP80459).